The chain runs to 282 residues: MIVSGLSGSGKSVALKTFEDLDYYCSDNLPVELLPDFVKSRLRGNPIGDQRLAVGIDVRSRSDLTQLAQWRQAAQEYGIEARLLFFEASDEALIKRYADTRRRHPLSHLGLALPEAITRERQLTEPLRTQADAVIDTSTLNVHQLRRRVVTEFALGSHDRLSLLFESFAYKRGVPAEADFVFDARVLPNPHWDPELRPLTGRDAGVRDYLDNEADVQRYSAQIVDLLDTWLPRLRNDTRSYVTIAFGCTGGKHRSVYMAERMARHAREQGWPEVATFHREQD.

5-12 (GLSGSGKS) provides a ligand contact to ATP. Residue 57–60 (DVRS) participates in GTP binding.

It belongs to the RapZ-like family.

Displays ATPase and GTPase activities. The protein is Nucleotide-binding protein XCV3122 of Xanthomonas euvesicatoria pv. vesicatoria (strain 85-10) (Xanthomonas campestris pv. vesicatoria).